Reading from the N-terminus, the 99-residue chain is Small ribosomal subunit protein bS6 (99 aa).

This sequence belongs to the bacterial ribosomal protein bS6 family.

In terms of biological role, binds together with bS18 to 16S ribosomal RNA. This chain is Small ribosomal subunit protein bS6, found in Lactiplantibacillus plantarum (strain ATCC BAA-793 / NCIMB 8826 / WCFS1) (Lactobacillus plantarum).